Consider the following 1113-residue polypeptide: uncharacterized protein (1113 aa).

ATP is bound at residue 313–320 (GPPGTGKS).

Belongs to the DNA2/NAM7 helicase family.

This is an uncharacterized protein from Mycoplasma pneumoniae (strain ATCC 29342 / M129 / Subtype 1) (Mycoplasmoides pneumoniae).